The following is a 637-amino-acid chain: Glutamate--cysteine ligase catalytic subunit (637 aa).

Met1 is subject to N-acetylmethionine. Residues Ser5 and Ser8 each carry the phosphoserine modification.

Belongs to the glutamate--cysteine ligase type 3 family. As to quaternary structure, heterodimer of a catalytic heavy chain and a regulatory light chain. Most abundant in kidney. Also found in liver and testis.

It carries out the reaction L-cysteine + L-glutamate + ATP = gamma-L-glutamyl-L-cysteine + ADP + phosphate + H(+). The catalysed reaction is (2S)-2-aminobutanoate + L-glutamate + ATP = gamma-L-glutamyl-(2S)-2-aminobutanoate + ADP + phosphate + H(+). It participates in sulfur metabolism; glutathione biosynthesis; glutathione from L-cysteine and L-glutamate: step 1/2. Its activity is regulated as follows. Feedback inhibition by glutathione. Catalyzes the ATP-dependent ligation of L-glutamate and L-cysteine and participates in the first and rate-limiting step in glutathione biosynthesis. The polypeptide is Glutamate--cysteine ligase catalytic subunit (Rattus norvegicus (Rat)).